We begin with the raw amino-acid sequence, 393 residues long: PGA synthase CapB (393 aa).

It depends on Mn(2+) as a cofactor.

Functionally, catalyzes the biosynthesis of PGA (gamma-polyglutamic acid) from L-glutamate. Both the 44-kDa and the 33-kDa forms are required for PGA synthesis. The polypeptide is PGA synthase CapB (capB) (Bacillus subtilis (strain 168)).